The sequence spans 160 residues: MRCPSCNSLDTQVKDSRPTEDSAVIRRRRVCMACNFRFTTFERVQLRELTVIKRNGRRVPFDRDKLVRSLQISLRKRPVEPERVETMVSAIVRELESGGEAEISSEIIGEIVMEHLRSLDDVAYVRFASVYRNFREAKDFEAVLGELSSEDDARPVPLRK.

A compositionally biased stretch (polar residues) spans Met1–Thr11. The interval Met1–Glu20 is disordered. A zinc finger spans residues Cys3–Cys34. The 91-residue stretch at Leu49–Asp139 folds into the ATP-cone domain.

This sequence belongs to the NrdR family. Zn(2+) is required as a cofactor.

Functionally, negatively regulates transcription of bacterial ribonucleotide reductase nrd genes and operons by binding to NrdR-boxes. The polypeptide is Transcriptional repressor NrdR (Nitrobacter hamburgensis (strain DSM 10229 / NCIMB 13809 / X14)).